The primary structure comprises 374 residues: tRNA-specific 2-thiouridylase MnmA (374 aa).

Residues 13-20 (GMSGGVDS) and methionine 39 each bind ATP. The interaction with target base in tRNA stretch occupies residues 99 to 101 (NPD). The active-site Nucleophile is the cysteine 104. Cysteine 104 and cysteine 201 are oxidised to a cystine. Glycine 128 lines the ATP pocket. Positions 151–153 (KDQ) are interaction with tRNA. The Cysteine persulfide intermediate role is filled by cysteine 201. An interaction with tRNA region spans residues 313 to 314 (RY).

This sequence belongs to the MnmA/TRMU family.

Its subcellular location is the cytoplasm. It carries out the reaction S-sulfanyl-L-cysteinyl-[protein] + uridine(34) in tRNA + AH2 + ATP = 2-thiouridine(34) in tRNA + L-cysteinyl-[protein] + A + AMP + diphosphate + H(+). Functionally, catalyzes the 2-thiolation of uridine at the wobble position (U34) of tRNA, leading to the formation of s(2)U34. This Streptococcus equi subsp. equi (strain 4047) protein is tRNA-specific 2-thiouridylase MnmA.